The following is a 300-amino-acid chain: Ribosomal RNA small subunit methyltransferase H (300 aa).

S-adenosyl-L-methionine-binding positions include 46-48 (GGH), aspartate 65, phenylalanine 92, aspartate 107, and glutamine 114.

The protein belongs to the methyltransferase superfamily. RsmH family.

The protein localises to the cytoplasm. It catalyses the reaction cytidine(1402) in 16S rRNA + S-adenosyl-L-methionine = N(4)-methylcytidine(1402) in 16S rRNA + S-adenosyl-L-homocysteine + H(+). In terms of biological role, specifically methylates the N4 position of cytidine in position 1402 (C1402) of 16S rRNA. This chain is Ribosomal RNA small subunit methyltransferase H, found in Prochlorococcus marinus (strain MIT 9301).